Consider the following 277-residue polypeptide: F41 fimbrial protein (277 aa).

A signal peptide spans 1 to 22; that stretch reads MKKTLIALAVAASAAVSGSVMA.

Belongs to the fimbrial K88 protein family.

Its subcellular location is the fimbrium. Its function is as follows. Fimbriae (also called pili), polar filaments radiating from the surface of the bacterium to a length of 0.5-1.5 micrometers and numbering 100-300 per cell, enable bacteria to colonize the epithelium of specific host organs. The chain is F41 fimbrial protein (FimF41a) from Escherichia coli.